The primary structure comprises 208 residues: MKKRLCAVLLASPLLFSAAVFADDAQQLRDKLIGTASLKADFKQTVTDVNKKVIQTGSGIFALAYPNQFYWHLTQPDESQIVADGKDLWIYNPFAEEVVIMDFAEAINASPIALLVHRDDATWSQYSVTKQQDCYEIKPKAIDSGILSVKVCFKNAQLANFNVADDKGNLSQFDLSNQQAITDKDKALFSFVLPDNVDVDDQRRKTAH.

The N-terminal stretch at 1–22 (MKKRLCAVLLASPLLFSAAVFA) is a signal peptide.

It belongs to the LolA family. In terms of assembly, monomer.

The protein resides in the periplasm. Participates in the translocation of lipoproteins from the inner membrane to the outer membrane. Only forms a complex with a lipoprotein if the residue after the N-terminal Cys is not an aspartate (The Asp acts as a targeting signal to indicate that the lipoprotein should stay in the inner membrane). This chain is Outer-membrane lipoprotein carrier protein, found in Shewanella baltica (strain OS223).